We begin with the raw amino-acid sequence, 576 residues long: Probable proline--tRNA ligase, mitochondrial (576 aa).

It belongs to the class-II aminoacyl-tRNA synthetase family.

It localises to the mitochondrion. It catalyses the reaction tRNA(Pro) + L-proline + ATP = L-prolyl-tRNA(Pro) + AMP + diphosphate. The chain is Probable proline--tRNA ligase, mitochondrial (AIM10) from Saccharomyces cerevisiae (strain ATCC 204508 / S288c) (Baker's yeast).